We begin with the raw amino-acid sequence, 545 residues long: MITNYIFVTGGVVSSLGKGIAAASLAAILEARSLKVTIMKLDPYINLDPGTISPKQHGEVFVTEDGAETDLDLGHYERFIRTKMTRHNNFTTGAIYSEVLQKERRGDYLGSTVQVIPHITNAIKERIVIAAQGYDVALVEIGGTVGDIESLPFLEAIRQMVTDVGRSHALYIHLTLLPYLTTAGEVKTKPTQHSVKELLSIGIQPDVLICRSDHEVPDHERSKIALFCNVEKKAVISLKDVDSIYKIPKILQSQGLDQYICDKFNLKCPKANLGQWEQVLYEECHCEGTVSIGMVGKYIELPDAYKSVIEALKHAGLKNRVKVNIQLIDAQELLTVGIEKLAGLNAILIPGGFGHRGIEGMIVAAQYARENRIPYLGICLGMQVALIEFARHVAGMEKANSTEFDPDARYPVIGLITEWQNEDGEIAVRSEKSNLGGTMRVGAQKCHLVKGSLTHQLYEKPIIIERHRHRYEVNNMILPIIEAAGLSVSGRSMDKKLVEIIELPHHPWFVACQFHPEFTSTPRDGHPLFIGFVKSALAHHQDSLK.

An amidoligase domain region spans residues 1 to 266 (MITNYIFVTG…DQYICDKFNL (266 aa)). Serine 14 serves as a coordination point for CTP. Serine 14 provides a ligand contact to UTP. ATP is bound by residues 15–20 (SLGKGI) and aspartate 72. Mg(2+)-binding residues include aspartate 72 and glutamate 140. CTP-binding positions include 147 to 149 (DIE), 187 to 192 (KTKPTQ), and lysine 223. UTP-binding positions include 187 to 192 (KTKPTQ) and lysine 223. 239 to 241 (KDV) contributes to the ATP binding site. Residues 291–542 (SIGMVGKYIE…VKSALAHHQD (252 aa)) enclose the Glutamine amidotransferase type-1 domain. L-glutamine is bound at residue glycine 352. Cysteine 379 acts as the Nucleophile; for glutamine hydrolysis in catalysis. L-glutamine is bound by residues 380–383 (LGMQ), glutamate 403, and arginine 470. Catalysis depends on residues histidine 515 and glutamate 517.

It belongs to the CTP synthase family. As to quaternary structure, homotetramer.

It carries out the reaction UTP + L-glutamine + ATP + H2O = CTP + L-glutamate + ADP + phosphate + 2 H(+). It catalyses the reaction L-glutamine + H2O = L-glutamate + NH4(+). The enzyme catalyses UTP + NH4(+) + ATP = CTP + ADP + phosphate + 2 H(+). Its pathway is pyrimidine metabolism; CTP biosynthesis via de novo pathway; CTP from UDP: step 2/2. Its activity is regulated as follows. Allosterically activated by GTP, when glutamine is the substrate; GTP has no effect on the reaction when ammonia is the substrate. The allosteric effector GTP functions by stabilizing the protein conformation that binds the tetrahedral intermediate(s) formed during glutamine hydrolysis. Inhibited by the product CTP, via allosteric rather than competitive inhibition. In terms of biological role, catalyzes the ATP-dependent amination of UTP to CTP with either L-glutamine or ammonia as the source of nitrogen. Regulates intracellular CTP levels through interactions with the four ribonucleotide triphosphates. In Hamiltonella defensa subsp. Acyrthosiphon pisum (strain 5AT), this protein is CTP synthase.